The following is a 309-amino-acid chain: tRNA uridine(34) hydroxylase (309 aa).

A Rhodanese domain is found at 130 to 225 (RGEEVVFFDG…YGEKYGNDGL (96 aa)). The Cysteine persulfide intermediate role is filled by Cys185.

Belongs to the TrhO family.

The enzyme catalyses uridine(34) in tRNA + AH2 + O2 = 5-hydroxyuridine(34) in tRNA + A + H2O. Its function is as follows. Catalyzes oxygen-dependent 5-hydroxyuridine (ho5U) modification at position 34 in tRNAs. The protein is tRNA uridine(34) hydroxylase of Corynebacterium aurimucosum (strain ATCC 700975 / DSM 44827 / CIP 107346 / CN-1) (Corynebacterium nigricans).